The following is a 374-amino-acid chain: Translocating chain-associated membrane protein 1 (374 aa).

The Cytoplasmic segment spans residues 1 to 29; the sequence is MAIRKKSSKNPPVLSHEFVLQNHADIVSC. Residues 30-50 form a helical membrane-spanning segment; that stretch reads VAMVFLLGLMFEITAKVSIIF. The Lumenal segment spans residues 51 to 81; it reads VTLQYNVTLPATEEQATESAFLYYYGIKDLA. A glycan (N-linked (GlcNAc...) asparagine) is linked at asparagine 56. The chain crosses the membrane as a helical span at residues 82–102; that stretch reads TVFFYMLVAIIIHAIIQEYVL. At 103–121 the chain is on the cytoplasmic side; that stretch reads DKINRRMHFSKTKHSKFNE. A TLC domain is found at 117-326; sequence SKFNESGQLS…NFQLRRWREH (210 aa). Residues 122–142 form a helical membrane-spanning segment; the sequence is SGQLSAFYLFSCIWGTFILIS. Over 143–159 the chain is Lumenal; the sequence is ENYISDPTILWRAYPHN. The helical transmembrane segment at 160 to 180 threads the bilayer; that stretch reads LMTFQMKFFYISQLAYWFHAF. Topologically, residues 181 to 192 are cytoplasmic; that stretch reads PELYFQKTKKED. Residues 193-213 form a helical membrane-spanning segment; the sequence is IPRQLVYIGLYLFHIAGAYLL. Position 214 (asparagine 214) is a topological domain, lumenal. The chain crosses the membrane as a helical span at residues 215-235; it reads LNHLGLVLLVLHYFVEFLFHI. The Cytoplasmic segment spans residues 236 to 251; the sequence is SRLFYFSDEKYQKGFS. The chain crosses the membrane as a helical span at residues 252–272; that stretch reads LWAVLFVLGRLLTLILSVLTV. At 273-297 the chain is on the lumenal side; sequence GFGLARAENQKLDFSTGNFNVLAVR. Residues 298-318 form a helical membrane-spanning segment; the sequence is IAVLASICITQAFMMWKFINF. At 319–374 the chain is on the cytoplasmic side; that stretch reads QLRRWREHSAFQAPAVKKKPPVTKGRSSRKGTENGVNGTVTSNGADSPRNRKEKSS. A disordered region spans residues 331–374; sequence APAVKKKPPVTKGRSSRKGTENGVNGTVTSNGADSPRNRKEKSS. Basic residues predominate over residues 334-347; that stretch reads VKKKPPVTKGRSSR. A compositionally biased stretch (polar residues) spans 352–363; that stretch reads NGVNGTVTSNGA. The residue at position 365 (serine 365) is a Phosphoserine.

Belongs to the TRAM family. As to quaternary structure, interacts with SEC61B. May interact with Derlin-1/DERL1. Post-translationally, N-glycosylated.

The protein resides in the endoplasmic reticulum membrane. Functionally, involved in the translocation of nascent protein chains into or through the endoplasmic reticulum (ER) membrane by facilitating the proper chain positioning at the SEC61 channel. Regulates the exposure of nascent secretory protein chain to the cytosol during translocation into the ER. May affect the phospholipid bilayer in the vicinity of the lateral gate of the SEC61 channel, thereby facilitating ER protein transport. Intimately associates with transmembrane (TM) domain of nascent membrane proteins during the entire integration process into the ER membrane. Associates with the second TM domain of G-protein-coupled receptor opsin/OPSD nascent chain in the ER membrane, which may facilitate its integration into the membrane. Under conditions of ER stress, participates in the disposal of misfolded ER membrane proteins during the unfolded protein response (UPR), an integrated stress response (ISR) pathway, by selectively retrotranslocating misfolded ER-membrane proteins from the ER into the cytosol where they are ubiquitinated and degraded by the proteasome. This chain is Translocating chain-associated membrane protein 1 (TRAM1), found in Bos taurus (Bovine).